Here is a 214-residue protein sequence, read N- to C-terminus: Small ribosomal subunit protein uS5 (214 aa).

The S5 DRBM domain maps to 55–118 (LKYERLDVGI…RNAKLNITPV (64 aa)).

The protein belongs to the universal ribosomal protein uS5 family. As to quaternary structure, part of the 30S ribosomal subunit. Contacts protein S4.

In terms of biological role, with S4 and S12 plays an important role in translational accuracy. The chain is Small ribosomal subunit protein uS5 from Staphylothermus marinus (strain ATCC 43588 / DSM 3639 / JCM 9404 / F1).